Consider the following 321-residue polypeptide: DNA packaging protein (321 aa).

Residues 1-196 (MLSYDRILNF…DERRKTKFGQ (196 aa)) are ATPase. ATP is bound at residue 13–20 (GARGIGKS). Residues 222 to 321 (KRSKNSKFVF…YEMFKKMRVQ (100 aa)) are DNA-binding.

This sequence belongs to the phi29likevirus gp16 family. As to quaternary structure, homopentamer. Interacts with the packaging RNA (pRNA). Part of a DNA-gp3-gp16 complex.

It carries out the reaction ATP + H2O = ADP + phosphate + H(+). In terms of biological role, ATPase required for the genome encapsidation reaction. Part of the active packaging motor via the binding to the packaging RNA (pRNA), itself fixed to the head-tail connector at the unique portal vertex of the prohead. Binds and supercoils the pre-formed, unit-length DNA bound to gp3 to produce an initiation complex for DNA packaging. Provides the energy to actively pump the viral DNA into the prohead. Approximately one molecule of ATP is used in the packaging of 2 bp of viral DNA. ATP hydrolysis results in a conformational change that causes the arginine/lysine finger of one subunit to move into the active site of its neighbor, where it interacts with the negatively charged oxygens on the gamma-phosphate of ATP. After packaging, the ATPase and the pRNA are released from the prohead. This chain is DNA packaging protein (16), found in Bacillus subtilis (Bacteriophage B103).